A 361-amino-acid polypeptide reads, in one-letter code: tRNA-specific 2-thiouridylase MnmA (361 aa).

Residues 8–15 and Met34 each bind ATP; that span reads AMSGGVDS. The active-site Nucleophile is the Cys104. Cys104 and Cys202 are joined by a disulfide. Gly128 lines the ATP pocket. An interaction with tRNA region spans residues 152 to 154; the sequence is KDQ. Cys202 acts as the Cysteine persulfide intermediate in catalysis. The interval 307–308 is interaction with tRNA; it reads RY.

It belongs to the MnmA/TRMU family.

It localises to the cytoplasm. The catalysed reaction is S-sulfanyl-L-cysteinyl-[protein] + uridine(34) in tRNA + AH2 + ATP = 2-thiouridine(34) in tRNA + L-cysteinyl-[protein] + A + AMP + diphosphate + H(+). In terms of biological role, catalyzes the 2-thiolation of uridine at the wobble position (U34) of tRNA, leading to the formation of s(2)U34. This chain is tRNA-specific 2-thiouridylase MnmA, found in Caldicellulosiruptor saccharolyticus (strain ATCC 43494 / DSM 8903 / Tp8T 6331).